Reading from the N-terminus, the 371-residue chain is Peptide chain release factor 2 (371 aa).

Residue Q251 is modified to N5-methylglutamine.

The protein belongs to the prokaryotic/mitochondrial release factor family. Methylated by PrmC. Methylation increases the termination efficiency of RF2.

It localises to the cytoplasm. In terms of biological role, peptide chain release factor 2 directs the termination of translation in response to the peptide chain termination codons UGA and UAA. The polypeptide is Peptide chain release factor 2 (Arthrobacter sp. (strain FB24)).